A 187-amino-acid chain; its full sequence is Peptidyl-tRNA hydrolase (187 aa).

Tyr15 contacts tRNA. The Proton acceptor role is filled by His20. The tRNA site is built by Phe64, Asn66, and Asn112.

The protein belongs to the PTH family. In terms of assembly, monomer.

It localises to the cytoplasm. The enzyme catalyses an N-acyl-L-alpha-aminoacyl-tRNA + H2O = an N-acyl-L-amino acid + a tRNA + H(+). Its function is as follows. Hydrolyzes ribosome-free peptidyl-tRNAs (with 1 or more amino acids incorporated), which drop off the ribosome during protein synthesis, or as a result of ribosome stalling. Catalyzes the release of premature peptidyl moieties from peptidyl-tRNA molecules trapped in stalled 50S ribosomal subunits, and thus maintains levels of free tRNAs and 50S ribosomes. In Parabacteroides distasonis (strain ATCC 8503 / DSM 20701 / CIP 104284 / JCM 5825 / NCTC 11152), this protein is Peptidyl-tRNA hydrolase.